A 216-amino-acid chain; its full sequence is Ras-related protein Rab-2B (216 aa).

Residues glycine 16, valine 17, glycine 18, lysine 19, serine 20, and cysteine 21 each contribute to the GDP site. Positions 16, 17, 18, 19, 20, 21, and 38 each coordinate GTP. A Mg(2+)-binding site is contributed by serine 20. A Switch 1 motif is present at residues 37-42; the sequence is LTIGVE. Mg(2+) is bound by residues threonine 38 and aspartate 61. A Switch 2 motif is present at residues 63 to 72; it reads AGQESFRSIT. GTP contacts are provided by glycine 64, asparagine 119, lysine 120, aspartate 122, alanine 150, and lysine 151. Asparagine 119 is a binding site for GDP. GDP is bound by residues aspartate 122, alanine 150, and lysine 151. The interval 189–216 is disordered; the sequence is PQQSISTSVGPSASQRNSRDIGSNSGCC. The residue at position 202 (serine 202) is a Phosphoserine. Residues cysteine 215 and cysteine 216 are each lipidated (S-geranylgeranyl cysteine).

The protein belongs to the small GTPase superfamily. Rab family. In terms of assembly, interacts (in GTP-bound form) with GARIN4 (via N-terminus). Interacts (in GTP-bound form) with GARIN5A. Interacts (in GTP-bound form) with GARIN1B. Interacts with VPS39 and VPS41. Mg(2+) is required as a cofactor. As to expression, expressed in kidney, prostate, lung, liver, thymus, colon, pancreas, and skeletal muscle, and low levels in placenta. Not detected in heart, brain, spleen, testis, ovary, small intestine and leukocyte.

Its subcellular location is the cell membrane. The protein resides in the endoplasmic reticulum membrane. It is found in the golgi apparatus membrane. It localises to the cytoplasmic vesicle. The protein localises to the secretory vesicle. Its subcellular location is the acrosome. The protein resides in the autophagosome membrane. It catalyses the reaction GTP + H2O = GDP + phosphate + H(+). Its activity is regulated as follows. Regulated by guanine nucleotide exchange factors (GEFs) which promote the exchange of bound GDP for free GTP, GTPase activating proteins (GAPs) which increase the GTP hydrolysis activity, and GDP dissociation inhibitors (GDIs) which inhibit the dissociation of the nucleotide from the GTPase. In terms of biological role, the small GTPases Rab are key regulators of intracellular membrane trafficking, from the formation of transport vesicles to their fusion with membranes. Rabs cycle between active GTP-bound and inactive GDP-bound states. In their active state, drive transport of vesicular carriers from donor organelles to acceptor organelles to regulate the membrane traffic that maintains organelle identity and morphology. Regulates the compacted morphology of the Golgi. Promotes cytosolic DNA-induced innate immune responses. Regulates IFN responses against DNA viruses by regulating the CGAS-STING signaling axis. Together with RAB2A redundantly required for efficient autophagic flux. The protein is Ras-related protein Rab-2B of Homo sapiens (Human).